Here is a 351-residue protein sequence, read N- to C-terminus: L-threonine 3-dehydrogenase (351 aa).

C39 serves as a coordination point for Zn(2+). Active-site charge relay system residues include T41 and H44. 6 residues coordinate Zn(2+): H64, E65, C94, C97, C100, and C108. NAD(+) contacts are provided by residues I176, D196, R201, L271 to I273, and I295 to Y296.

Belongs to the zinc-containing alcohol dehydrogenase family. In terms of assembly, homotetramer. The cofactor is Zn(2+).

The protein resides in the cytoplasm. The enzyme catalyses L-threonine + NAD(+) = (2S)-2-amino-3-oxobutanoate + NADH + H(+). The protein operates within amino-acid degradation; L-threonine degradation via oxydo-reductase pathway; glycine from L-threonine: step 1/2. Functionally, catalyzes the NAD(+)-dependent oxidation of L-threonine to 2-amino-3-ketobutyrate. This is L-threonine 3-dehydrogenase from Francisella tularensis subsp. novicida (strain U112).